The primary structure comprises 407 residues: Carbamoyl phosphate synthase small chain (407 aa).

The segment at 1-203 is CPSase; sequence MSQNESGTIA…EPCGEYEGKE (203 aa). The L-glutamine site is built by S61, G255, and G257. In terms of domain architecture, Glutamine amidotransferase type-1 spans 207–405; it reads TVAAVDLGIK…CELMKNNSKE (199 aa). The active-site Nucleophile is C283. Residues F284, Q287, N325, G327, and F328 each coordinate L-glutamine. Residues H378 and E380 contribute to the active site.

Belongs to the CarA family. In terms of assembly, composed of two chains; the small (or glutamine) chain promotes the hydrolysis of glutamine to ammonia, which is used by the large (or ammonia) chain to synthesize carbamoyl phosphate. Tetramer of heterodimers (alpha,beta)4.

It catalyses the reaction hydrogencarbonate + L-glutamine + 2 ATP + H2O = carbamoyl phosphate + L-glutamate + 2 ADP + phosphate + 2 H(+). The catalysed reaction is L-glutamine + H2O = L-glutamate + NH4(+). It functions in the pathway amino-acid biosynthesis; L-arginine biosynthesis; carbamoyl phosphate from bicarbonate: step 1/1. It participates in pyrimidine metabolism; UMP biosynthesis via de novo pathway; (S)-dihydroorotate from bicarbonate: step 1/3. Its function is as follows. Small subunit of the glutamine-dependent carbamoyl phosphate synthetase (CPSase). CPSase catalyzes the formation of carbamoyl phosphate from the ammonia moiety of glutamine, carbonate, and phosphate donated by ATP, constituting the first step of 2 biosynthetic pathways, one leading to arginine and/or urea and the other to pyrimidine nucleotides. The small subunit (glutamine amidotransferase) binds and cleaves glutamine to supply the large subunit with the substrate ammonia. This Bifidobacterium longum (strain NCC 2705) protein is Carbamoyl phosphate synthase small chain.